The primary structure comprises 880 residues: DNA mismatch repair protein MutS (880 aa).

An ATP-binding site is contributed by 635 to 642 (GPNMGGKS).

Belongs to the DNA mismatch repair MutS family.

Its function is as follows. This protein is involved in the repair of mismatches in DNA. It is possible that it carries out the mismatch recognition step. This protein has a weak ATPase activity. This Nitrosomonas eutropha (strain DSM 101675 / C91 / Nm57) protein is DNA mismatch repair protein MutS.